The chain runs to 468 residues: Cysteine--tRNA ligase (468 aa).

Cys-36 serves as a coordination point for Zn(2+). Positions 38 to 48 (PTVYNRSHIGN) match the 'HIGH' region motif. Cys-216, His-241, and Glu-245 together coordinate Zn(2+). Residues 274-278 (KMSKS) carry the 'KMSKS' region motif. Lys-277 contacts ATP.

This sequence belongs to the class-I aminoacyl-tRNA synthetase family. As to quaternary structure, monomer. Requires Zn(2+) as cofactor.

Its subcellular location is the cytoplasm. It carries out the reaction tRNA(Cys) + L-cysteine + ATP = L-cysteinyl-tRNA(Cys) + AMP + diphosphate. The polypeptide is Cysteine--tRNA ligase (Parvibaculum lavamentivorans (strain DS-1 / DSM 13023 / NCIMB 13966)).